Reading from the N-terminus, the 215-residue chain is GTP-binding nuclear protein Ran (215 aa).

Positions 6–170 (DIPTFKLVLV…LWLVRKLLGD (165 aa)) constitute a Small GTPase Ran-type domain. GTP is bound by residues 17 to 24 (DGGTGKTT), 35 to 41 (EKKYVAT), G67, 121 to 124 (NFVD), and 149 to 151 (SAK). Residues 36 to 44 (KKYVATLGV) are switch-I. The tract at residues 67 to 83 (GQEKFGGLRDGYYIQGQ) is switch-II. The tract at residues 210–215 (DDDEDL) is interaction with RANBP1.

The protein belongs to the small GTPase superfamily. Ran family. In terms of assembly, monomer. Interacts with RANGAP1, which promotes RAN-mediated GTP hydrolysis. Interacts with KPNB1. Interaction with KPNB1 inhibits RANGAP1-mediated stimulation of GTPase activity. Interacts with RCC1 which promotes the exchange of RAN-bound GDP by GTP. Interaction with KPNB1 inhibits RCC1-mediated exchange of RAN-bound GDP by GTP. Interacts (GTP-bound form) with TNPO1; the interaction is direct. Interacts with KPNB1 and with TNPO1; both inhibit RAN GTPase activity. Interacts (via C-terminus) with RANBP1, which alleviates the inhibition of RAN GTPase activity. Interacts with RANGRF, which promotes the release of bound guanine nucleotide. RANGRF and RCC1 compete for an overlapping binding site on RAN. Identified in a complex with KPNA2 and CSE1L; interaction with RANBP1 mediates dissociation of RAN from this complex. Interaction with both RANBP1 and KPNA2 promotes dissociation of the complex between RAN and KPNB1. Identified in a complex composed of RAN, RANGAP1 and RANBP1. Identified in a complex that contains TNPO1, RAN and RANBP1. Identified in a nuclear export complex with XPO1. Interaction with RANBP1 or RANBP2 induces a conformation change in the complex formed by XPO1 and RAN that triggers the release of the nuclear export signal of cargo proteins. Component of a nuclear export receptor complex composed of KPNB1, RAN, SNUPN and XPO1. Requires Mg(2+) as cofactor.

It is found in the nucleus. The protein localises to the nucleus envelope. It localises to the cytoplasm. Its subcellular location is the cytosol. Its function is as follows. GTPase involved in nucleocytoplasmic transport, participating both to the import and the export from the nucleus of proteins and RNAs. Switches between a cytoplasmic GDP- and a nuclear GTP-bound state by nucleotide exchange and GTP hydrolysis. Nuclear import receptors such as importin beta bind their substrates only in the absence of GTP-bound RAN and release them upon direct interaction with GTP-bound RAN, while export receptors behave in the opposite way. Thereby, RAN controls cargo loading and release by transport receptors in the proper compartment and ensures the directionality of the transport. Interaction with RANBP1 induces a conformation change in the complex formed by XPO1 and RAN that triggers the release of the nuclear export signal of cargo proteins. RAN (GTP-bound form) triggers microtubule assembly at mitotic chromosomes and is required for normal mitotic spindle assembly and chromosome segregation. Required for normal progress through mitosis. The protein is GTP-binding nuclear protein Ran (ran-1) of Onchocerca volvulus.